The following is a 317-amino-acid chain: Hairy/enhancer-of-split related with YRPW motif protein 1 (317 aa).

The interval 1 to 59 is disordered; sequence MKRNHDFSSSDSELDENIEVEKESADENAGANSPLGSMSPSTTSQVQARKRRRGIIEKR. Residues 30–47 show a composition bias toward polar residues; it reads GANSPLGSMSPSTTSQVQ. A bHLH domain is found at 48–103; the sequence is ARKRRRGIIEKRRRDRINNSLSELRRLVPSAFEKQGSAKLEKAEILQMTVDHLKML. The Orange domain maps to 121–157; that stretch reads YRGLGFRECLAETARYLSIIEGLDNTDPLRIRLVSHL. Composition is skewed to low complexity over residues 193 to 226 and 248 to 264; these read QQQQQQGAPLARSTSSPPSSNSSSPSSSSPSAPS and PPSTSLPPGLTPPTASK. The tract at residues 193–264 is disordered; that stretch reads QQQQQQGAPL…PGLTPPTASK (72 aa). Positions 307–310 match the YRPW motif motif; it reads YRPW.

Belongs to the HEY family.

It is found in the nucleus. Its function is as follows. Transcriptional repressor which functions as a downstream effector of Notch signaling. The polypeptide is Hairy/enhancer-of-split related with YRPW motif protein 1 (hey1) (Danio rerio (Zebrafish)).